The following is a 162-amino-acid chain: Small ribosomal subunit protein uS19 (162 aa).

Residues 1 to 27 are compositionally biased toward basic residues; it reads MAKQKKFSGKGSARSKRKQNRKQVGPR. Residues 1 to 29 are disordered; it reads MAKQKKFSGKGSARSKRKQNRKQVGPRRR.

Belongs to the universal ribosomal protein uS19 family.

Its function is as follows. Protein S19 forms a complex with S13 that binds strongly to the 16S ribosomal RNA. The sequence is that of Small ribosomal subunit protein uS19 from Methanococcus aeolicus (strain ATCC BAA-1280 / DSM 17508 / OCM 812 / Nankai-3).